The chain runs to 58 residues: Large ribosomal subunit protein bL32 (58 aa).

This sequence belongs to the bacterial ribosomal protein bL32 family.

The sequence is that of Large ribosomal subunit protein bL32 from Synechococcus sp. (strain WH7803).